Consider the following 552-residue polypeptide: Chaperonin GroEL 3 (552 aa).

ATP is bound by residues 30-33 (TLGP), Lys-51, 87-91 (DGTTT), Gly-415, and Asp-495.

Belongs to the chaperonin (HSP60) family. Forms a cylinder of 14 subunits composed of two heptameric rings stacked back-to-back. Interacts with the co-chaperonin GroES.

Its subcellular location is the cytoplasm. The catalysed reaction is ATP + H2O + a folded polypeptide = ADP + phosphate + an unfolded polypeptide.. Functionally, together with its co-chaperonin GroES, plays an essential role in assisting protein folding. The GroEL-GroES system forms a nano-cage that allows encapsulation of the non-native substrate proteins and provides a physical environment optimized to promote and accelerate protein folding. This Mesorhizobium japonicum (strain LMG 29417 / CECT 9101 / MAFF 303099) (Mesorhizobium loti (strain MAFF 303099)) protein is Chaperonin GroEL 3.